The chain runs to 507 residues: Fumarate hydratase, mitochondrial (507 aa).

The transit peptide at 1-41 directs the protein to the mitochondrion; the sequence is MYRALRLLARSRRLLRVPSAGAAVSGEATTLPRCAPNVARM. Residues Lys58, Lys63, and Lys77 each carry the N6-acetyllysine; alternate modification. Lys58, Lys63, and Lys77 each carry N6-succinyllysine; alternate. Residue Thr82 is modified to Phosphothreonine. Residues Lys112 and Lys119 each carry the N6-acetyllysine; alternate modification. Residues Lys112 and Lys119 each carry the N6-succinyllysine; alternate modification. Substrate is bound by residues 142 to 144, 173 to 176, and 183 to 185; these read SGT, HPND, and SSN. Position 210 is an N6-acetyllysine (Lys210). Lys220 carries the N6-acetyllysine; alternate modification. The residue at position 220 (Lys220) is an N6-succinyllysine; alternate. Thr231 contacts substrate. His232 serves as the catalytic Proton donor/acceptor. Thr233 carries the post-translational modification Phosphothreonine. Position 289 is an N6-acetyllysine; alternate (Lys289). Lys289 is subject to N6-succinyllysine; alternate. Ser362 is an active-site residue. Residues Ser363 and 368–370 each bind substrate; that span reads KVN. Phosphoserine is present on Ser363. Lys464 and Lys470 each carry N6-succinyllysine. Lys499 carries the post-translational modification N6-acetyllysine.

It belongs to the class-II fumarase/aspartase family. Fumarase subfamily. In terms of assembly, homotetramer. Interacts with H2AZ1. Post-translationally, phosphorylation at Thr-233 by PRKDC in response to DNA damage promotes translocation to the nucleus and recruitment to DNA double-strand breaks (DSBs).

The protein localises to the mitochondrion. It localises to the cytoplasm. It is found in the cytosol. The protein resides in the nucleus. Its subcellular location is the chromosome. It catalyses the reaction (S)-malate = fumarate + H2O. It participates in carbohydrate metabolism; tricarboxylic acid cycle; (S)-malate from fumarate: step 1/1. Functionally, catalyzes the reversible stereospecific interconversion of fumarate to L-malate. Experiments in different species have demonstrated that specific isoforms of this protein act in defined pathways and favor one direction over the other. Its function is as follows. Catalyzes the hydration of fumarate to L-malate in the tricarboxylic acid (TCA) cycle to facilitate a transition step in the production of energy in the form of NADH. Catalyzes the dehydration of L-malate to fumarate. Fumarate metabolism in the cytosol plays a role during urea cycle and arginine metabolism; fumarate being a by-product of the urea cycle and amino-acid catabolism. Also plays a role in DNA repair by promoting non-homologous end-joining (NHEJ). In response to DNA damage and phosphorylation by PRKDC, translocates to the nucleus and accumulates at DNA double-strand breaks (DSBs): acts by catalyzing formation of fumarate, an inhibitor of KDM2B histone demethylase activity, resulting in enhanced dimethylation of histone H3 'Lys-36' (H3K36me2). This chain is Fumarate hydratase, mitochondrial, found in Mus musculus (Mouse).